The primary structure comprises 239 residues: DNA repair protein RecO (239 aa).

This sequence belongs to the RecO family.

In terms of biological role, involved in DNA repair and RecF pathway recombination. The polypeptide is DNA repair protein RecO (Cereibacter sphaeroides (strain KD131 / KCTC 12085) (Rhodobacter sphaeroides)).